Reading from the N-terminus, the 61-residue chain is Lens epithelial cell protein LEP503 (61 aa).

Restricted to lens epithelial cells.

In terms of biological role, may play a role in lens epithelial cell differentiation. The polypeptide is Lens epithelial cell protein LEP503 (LENEP) (Homo sapiens (Human)).